A 234-amino-acid chain; its full sequence is Exotoxin type G (234 aa).

Residues methionine 1–alanine 24 form the signal peptide.

This sequence belongs to the staphylococcal/streptococcal toxin family.

Mitogenic for human peripheral blood lymphocytes. The chain is Exotoxin type G (speG) from Streptococcus pyogenes serotype M1.